Reading from the N-terminus, the 139-residue chain is Protein COLD-REGULATED 15A, chloroplastic (139 aa).

The N-terminal 40 residues, 1–40, are a transit peptide targeting the chloroplast; that stretch reads MAMSFSGAVLTGMASSFHSGAKQSSFGAVRVGQKTQFVVV.

Belongs to the COR15 protein family. Forms homooligomers which interact with potential stromal substrates in the stroma of chloroplasts. Interacts with the galactose headgroup of the chloroplast lipid monogalactosyldiacylglycerol (MGDG).

The protein resides in the plastid. Its subcellular location is the chloroplast stroma. Its function is as follows. Exhibits cryoprotective activity toward stromal substrates (e.g. LDH and rubisco) in chloroplasts and in protoplasts and confers freezing tolerance to plants in a CBF-dependent manner. Protectant against various stresses (e.g. cold, drought and heat stress) by preventing protein aggregation (e.g. LDH) and attenuating enzyme inactivation. Influences the intrinsic curvature of the inner membrane of the chloroplast envelope, and modulates the freeze-induced lamellar-to-hexagonal II phase transitions that occur in regions where the plasma membrane is brought into close apposition with the chloroplast envelope during freeze-induced osmotic contraction. Mediates a shift in the melting curves of phospholipids-containing membranes to lower temperatures. Involved in the regulation of leaf senescence by abscisic acid (ABA) in a VNI2-dependent manner. The polypeptide is Protein COLD-REGULATED 15A, chloroplastic (Arabidopsis thaliana (Mouse-ear cress)).